A 120-amino-acid polypeptide reads, in one-letter code: NAD(P)H-quinone oxidoreductase subunit 3, chloroplastic (120 aa).

Transmembrane regions (helical) follow at residues 9–29, 64–84, and 88–108; these read IFWA…LISA, MFAL…PWAM, and VLGV…IVGL.

This sequence belongs to the complex I subunit 3 family. As to quaternary structure, NDH is composed of at least 16 different subunits, 5 of which are encoded in the nucleus.

The protein resides in the plastid. The protein localises to the chloroplast thylakoid membrane. It carries out the reaction a plastoquinone + NADH + (n+1) H(+)(in) = a plastoquinol + NAD(+) + n H(+)(out). The catalysed reaction is a plastoquinone + NADPH + (n+1) H(+)(in) = a plastoquinol + NADP(+) + n H(+)(out). In terms of biological role, NDH shuttles electrons from NAD(P)H:plastoquinone, via FMN and iron-sulfur (Fe-S) centers, to quinones in the photosynthetic chain and possibly in a chloroplast respiratory chain. The immediate electron acceptor for the enzyme in this species is believed to be plastoquinone. Couples the redox reaction to proton translocation, and thus conserves the redox energy in a proton gradient. This Citrus sinensis (Sweet orange) protein is NAD(P)H-quinone oxidoreductase subunit 3, chloroplastic.